A 484-amino-acid polypeptide reads, in one-letter code: MVRVELQAASLMNGSSAAEEPQDALVGGDACGGRRPPSVLGVRLAVPEWEVAVTAVSLSLIILITIVGNVLVVLSVFTYKPLRIVQNFFIVSLAVADLTVAVLVMPFNVAYSLIQRWVFGIVVCKMWLTCDVLCCTASILNLCAIALDRYWAITDPINYAQKRTLRRVLAMIAGVWLLSGVISSPPLIGWNDWPMEFNDTTPCQLTEEQGYVIYSSLGSFFIPLFIMTIVYVEIFIATKRRLRERAKASKLNSAMKQQMAAQAVPSSVPSHDQESVSSETNHNELPPPPAPPSKEKRRKTKKKSKKKEQAAEEGRFLAPAMVAEDSVTDNSVSVGPVARNHLAEDGYTCTTTTTTTTTTTAVTDSPRSRTASQKGSTAPPTPVQPKSIPVYQFIEEKQRISLSKERRAARTLGIIMGVFVVCWLPFFLMYVIVPFCNPSCKPSPKLVNFITWLGYINSALNPIIYTIFNLDFRRAFKKLLHFKT.

Residues 1–54 (MVRVELQAASLMNGSSAAEEPQDALVGGDACGGRRPPSVLGVRLAVPEWEVAVT) are Extracellular-facing. N13 carries N-linked (GlcNAc...) asparagine glycosylation. A helical membrane pass occupies residues 55–77 (AVSLSLIILITIVGNVLVVLSVF). Residues 78 to 87 (TYKPLRIVQN) are Cytoplasmic-facing. A helical membrane pass occupies residues 88–109 (FFIVSLAVADLTVAVLVMPFNV). Over 110 to 126 (AYSLIQRWVFGIVVCKM) the chain is Extracellular. C124 and C203 form a disulfide bridge. A helical membrane pass occupies residues 127–147 (WLTCDVLCCTASILNLCAIAL). The Cytoplasmic segment spans residues 148-167 (DRYWAITDPINYAQKRTLRR). The helical transmembrane segment at 168-190 (VLAMIAGVWLLSGVISSPPLIGW) threads the bilayer. The Extracellular segment spans residues 191–215 (NDWPMEFNDTTPCQLTEEQGYVIYS). A glycan (N-linked (GlcNAc...) asparagine) is linked at N198. A helical membrane pass occupies residues 216-237 (SLGSFFIPLFIMTIVYVEIFIA). Residues 238 to 411 (TKRRLRERAK…LSKERRAART (174 aa)) lie on the Cytoplasmic side of the membrane. The span at 253–280 (SAMKQQMAAQAVPSSVPSHDQESVSSET) shows a compositional bias: polar residues. Disordered stretches follow at residues 253–322 (SAMK…PAMV) and 358–383 (TTTA…PTPV). Basic residues predominate over residues 295 to 306 (EKRRKTKKKSKK). The span at 361–378 (AVTDSPRSRTASQKGSTA) shows a compositional bias: polar residues. The helical transmembrane segment at 412–433 (LGIIMGVFVVCWLPFFLMYVIV) threads the bilayer. The Extracellular portion of the chain corresponds to 434–448 (PFCNPSCKPSPKLVN). Residues 449–470 (FITWLGYINSALNPIIYTIFNL) form a helical membrane-spanning segment. Topologically, residues 471-484 (DFRRAFKKLLHFKT) are cytoplasmic.

This sequence belongs to the G-protein coupled receptor 1 family. Present mainly in the central nervous system, especially in the supra- and subesophageal, thoracic and abdominal ganglia. Not found in the distal part of optic lobes.

Its subcellular location is the cell membrane. Its function is as follows. G-protein coupled receptor for tyramine, a known neurotransmitter and neuromodulator and direct precursor of octopamine. The rank order of potency for agonists of this receptor is tyramine &gt; naphazoline &gt; tolazoline &gt; DL-octopamine &gt; dopamine &gt; epinephrine &gt; 5-hydroxytryptamine. For antagonists, the rank order is yohimbine &gt; chlorpromazine &gt; mianserin &gt; phentolamine &gt; metoclopramide. This is Tyramine receptor 1 (GCR1) from Locusta migratoria (Migratory locust).